Reading from the N-terminus, the 196-residue chain is Peptidyl-tRNA hydrolase (196 aa).

Tyrosine 18 provides a ligand contact to tRNA. Residue histidine 23 is the Proton acceptor of the active site. Residues phenylalanine 69, asparagine 71, and asparagine 117 each coordinate tRNA.

This sequence belongs to the PTH family. As to quaternary structure, monomer.

It is found in the cytoplasm. The enzyme catalyses an N-acyl-L-alpha-aminoacyl-tRNA + H2O = an N-acyl-L-amino acid + a tRNA + H(+). In terms of biological role, hydrolyzes ribosome-free peptidyl-tRNAs (with 1 or more amino acids incorporated), which drop off the ribosome during protein synthesis, or as a result of ribosome stalling. Its function is as follows. Catalyzes the release of premature peptidyl moieties from peptidyl-tRNA molecules trapped in stalled 50S ribosomal subunits, and thus maintains levels of free tRNAs and 50S ribosomes. The polypeptide is Peptidyl-tRNA hydrolase (Vibrio campbellii (strain ATCC BAA-1116)).